The following is a 121-amino-acid chain: uncharacterized protein (121 aa).

A compositionally biased stretch (low complexity) spans 12 to 24 (EEGGASAAAPDAS). Disordered regions lie at residues 12 to 63 (EEGG…RLEP) and 101 to 121 (KKLAQQPPRLEGSQKERSPVV). Over residues 26 to 35 (KSKKGARPCF) the composition is skewed to basic residues. Residues 40-49 (QAGSCMTGRQ) show a composition bias toward polar residues. Positions 112 to 121 (GSQKERSPVV) are enriched in basic and acidic residues.

This is an uncharacterized protein from Homo sapiens (Human).